The primary structure comprises 235 residues: Octanoyltransferase (235 aa).

Residues 44–231 (DTTADELWLV…HQVGLPNENN (188 aa)) form the BPL/LPL catalytic domain. Substrate is bound by residues 83–90 (RGGQVTYH), 150–152 (SLG), and 163–165 (GLA). Catalysis depends on C181, which acts as the Acyl-thioester intermediate.

This sequence belongs to the LipB family.

The protein resides in the cytoplasm. The enzyme catalyses octanoyl-[ACP] + L-lysyl-[protein] = N(6)-octanoyl-L-lysyl-[protein] + holo-[ACP] + H(+). Its pathway is protein modification; protein lipoylation via endogenous pathway; protein N(6)-(lipoyl)lysine from octanoyl-[acyl-carrier-protein]: step 1/2. Functionally, catalyzes the transfer of endogenously produced octanoic acid from octanoyl-acyl-carrier-protein onto the lipoyl domains of lipoate-dependent enzymes. Lipoyl-ACP can also act as a substrate although octanoyl-ACP is likely to be the physiological substrate. This Colwellia psychrerythraea (strain 34H / ATCC BAA-681) (Vibrio psychroerythus) protein is Octanoyltransferase.